The chain runs to 163 residues: MVKKKSSKAAPATIARNKRATFEYRFEEKMEAGLSLMGWEVKSIRMGKVNLSDCYVFLKNGEAFMHGCTIIPLNTASTHVVCDPLRLKKLLLSRKELDKLAGLVERQGYSIIPISMYWRKGAWVKVEIGLGKGKKDHDKREDTKAREWEVEKARVMKKEKTHG.

It belongs to the SmpB family.

It is found in the cytoplasm. Its function is as follows. Required for rescue of stalled ribosomes mediated by trans-translation. Binds to transfer-messenger RNA (tmRNA), required for stable association of tmRNA with ribosomes. tmRNA and SmpB together mimic tRNA shape, replacing the anticodon stem-loop with SmpB. tmRNA is encoded by the ssrA gene; the 2 termini fold to resemble tRNA(Ala) and it encodes a 'tag peptide', a short internal open reading frame. During trans-translation Ala-aminoacylated tmRNA acts like a tRNA, entering the A-site of stalled ribosomes, displacing the stalled mRNA. The ribosome then switches to translate the ORF on the tmRNA; the nascent peptide is terminated with the 'tag peptide' encoded by the tmRNA and targeted for degradation. The ribosome is freed to recommence translation, which seems to be the essential function of trans-translation. The sequence is that of SsrA-binding protein from Shewanella putrefaciens (strain CN-32 / ATCC BAA-453).